A 192-amino-acid polypeptide reads, in one-letter code: dTDP-4-amino-4,6-dideoxy-D-glucose acyltransferase (192 aa).

It belongs to the transferase hexapeptide repeat family.

The catalysed reaction is dTDP-4-amino-4,6-dideoxy-alpha-D-glucose + acetyl-CoA = dTDP-4-acetamido-4,6-dideoxy-alpha-D-glucose + CoA + H(+). It functions in the pathway bacterial outer membrane biogenesis; lipopolysaccharide biosynthesis. In terms of biological role, catalyzes the conversion of dTDP-4-amino-4,6-dideoxy-D-glucose (dTDP-D-Qui4N) to dTDP-4-acetamido-4,6-dideoxy-D-glucose (dTDP-D-Qui4NAc). The chain is dTDP-4-amino-4,6-dideoxy-D-glucose acyltransferase (vioB) from Escherichia coli.